Reading from the N-terminus, the 410-residue chain is MVKVKQSEINIGMVGHVDHGKTSLTRQLTGTWTDTHSEELKRGISIRLGYADCEIMKCPKCGAPEAYSVSKTCPVCGTKTKMSRKISFVDAPGHETLMATMLSGASLMNGAILVIAATEKCPQPQTKEHLMALDALGIENIIIVQNKIDLVDEERAKESYNEIKEFVKDTVAEKAPIIPISAHHGANIDILLNAIEDLMPTPEMDEGAPARLYVARSFDINKPGCEISKLKGGVIGGSIIQGTLNSGEKIEIKPGLKIVEGNKIRWESIITKITSLGVGGKTVKVAHPGGLVGIGTELDPALTKSDSLSGCVAGAPGTLPETLSEITVQTKLLDRIVGSDEELIISPLKSNEALMLNVGTATTVGIITSARGDMADMKLKLPICADKGDRIAMSRRIGSRWRLIGYGIIQ.

The region spanning 6–203 is the tr-type G domain; that stretch reads QSEINIGMVG…AIEDLMPTPE (198 aa). Residues 15-22 form a G1 region; it reads GHVDHGKT. The Mg(2+) site is built by Asp-18, Thr-22, Gly-43, and Ser-45. 18 to 23 provides a ligand contact to GTP; sequence DHGKTS. The G2 stretch occupies residues 43–47; sequence GISIR. Positions 58, 61, 73, and 76 each coordinate Zn(2+). A G3 region spans residues 90–93; that stretch reads DAPG. Residues 146-149 and 181-183 each bind GTP; these read NKID and SAH. The tract at residues 146–149 is G4; it reads NKID. Residues 181 to 183 are G5; the sequence is SAH.

It belongs to the TRAFAC class translation factor GTPase superfamily. Classic translation factor GTPase family. EIF2G subfamily. In terms of assembly, heterotrimer composed of an alpha, a beta and a gamma chain. The cofactor is Mg(2+).

It carries out the reaction GTP + H2O = GDP + phosphate + H(+). Functionally, eIF-2 functions in the early steps of protein synthesis by forming a ternary complex with GTP and initiator tRNA. This is Translation initiation factor 2 subunit gamma from Methanococcus aeolicus (strain ATCC BAA-1280 / DSM 17508 / OCM 812 / Nankai-3).